The chain runs to 371 residues: Bifunctional enzyme IspD/IspF (371 aa).

The segment at 1-210 (MSEISLIMLA…LDLPTPSFEI (210 aa)) is 2-C-methyl-D-erythritol 4-phosphate cytidylyltransferase. The interval 211–371 (FTGNGFDVHE…NLKYFDWTRL (161 aa)) is 2-C-methyl-D-erythritol 2,4-cyclodiphosphate synthase. Positions 217 and 219 each coordinate a divalent metal cation. 4-CDP-2-C-methyl-D-erythritol 2-phosphate is bound by residues 217-219 (DVH) and 243-244 (HS). His-251 provides a ligand contact to a divalent metal cation. Residues 265-267 (DIG), 270-274 (YPDTD), 341-344 (TTTE), Phe-348, and Arg-351 each bind 4-CDP-2-C-methyl-D-erythritol 2-phosphate.

This sequence in the N-terminal section; belongs to the IspD/TarI cytidylyltransferase family. IspD subfamily. The protein in the C-terminal section; belongs to the IspF family. It depends on a divalent metal cation as a cofactor.

It catalyses the reaction 2-C-methyl-D-erythritol 4-phosphate + CTP + H(+) = 4-CDP-2-C-methyl-D-erythritol + diphosphate. The enzyme catalyses 4-CDP-2-C-methyl-D-erythritol 2-phosphate = 2-C-methyl-D-erythritol 2,4-cyclic diphosphate + CMP. It functions in the pathway isoprenoid biosynthesis; isopentenyl diphosphate biosynthesis via DXP pathway; isopentenyl diphosphate from 1-deoxy-D-xylulose 5-phosphate: step 2/6. It participates in isoprenoid biosynthesis; isopentenyl diphosphate biosynthesis via DXP pathway; isopentenyl diphosphate from 1-deoxy-D-xylulose 5-phosphate: step 4/6. In terms of biological role, bifunctional enzyme that catalyzes the formation of 4-diphosphocytidyl-2-C-methyl-D-erythritol from CTP and 2-C-methyl-D-erythritol 4-phosphate (MEP) (IspD), and catalyzes the conversion of 4-diphosphocytidyl-2-C-methyl-D-erythritol 2-phosphate (CDP-ME2P) to 2-C-methyl-D-erythritol 2,4-cyclodiphosphate (ME-CPP) with a corresponding release of cytidine 5-monophosphate (CMP) (IspF). In Campylobacter jejuni subsp. jejuni serotype O:6 (strain 81116 / NCTC 11828), this protein is Bifunctional enzyme IspD/IspF.